The chain runs to 387 residues: Transmembrane protein 120 homolog (387 aa).

Residues 1 to 39 (MNIDSLKNEWEELNKEFAELESCNRRYIELLEQLHSHQQ) adopt a coiled-coil conformation. An N-linked (GlcNAc...) asparagine glycan is attached at asparagine 111. Helical transmembrane passes span 130 to 150 (FKLILNVIGLIMAFFNLIFNY), 155 to 175 (LAFIFLLVWYYCTLTIRESIL), 191 to 211 (FISTVAAGVLLVWPQGEHWQI), 216 to 238 (FMYFNVYISIVQYLQFGYQKGLL), 264 to 284 (GLSFLLPFLFIGYGYQAYNAW), and 302 to 322 (VMSGLFLLLFVGNMATTLWVV). Positions 346–387 (RKEMKNSASDLDLSSGSKLSPTATTTTSIATATQTPAEKKET) are disordered. A phosphoserine mark is found at serine 352, serine 354, and serine 365. The span at 352 to 381 (SASDLDLSSGSKLSPTATTTTSIATATQTP) shows a compositional bias: low complexity.

This sequence belongs to the TMEM120 family.

The protein localises to the membrane. The protein is Transmembrane protein 120 homolog of Drosophila melanogaster (Fruit fly).